A 473-amino-acid polypeptide reads, in one-letter code: Exodeoxyribonuclease I (473 aa).

The Exonuclease domain maps to 9 to 188; it reads IYDYESFGVN…AMADVYATIA (180 aa). Asp11, Glu13, and Asp182 together coordinate Mg(2+). Substrate is bound at residue Glu13. Residues 198–353 form the ExoI SH3-like domain; that stretch reads PKLFQYFFEN…KVADIFNEER (156 aa). The ExoI C-terminal domain maps to 356-472; sequence ASNDNVETEL…QVYEYGIKLL (117 aa).

Monomer. Interacts with ssb (via C-terminus); this interaction stimulates the exonuclease activity by recruiting the enzyme to its substrate. Mg(2+) is required as a cofactor.

It carries out the reaction Exonucleolytic cleavage in the 3'- to 5'-direction to yield nucleoside 5'-phosphates.. Functionally, degrades single-stranded DNA (ssDNA) in a highly processive manner. Also functions as a DNA deoxyribophosphodiesterase that releases deoxyribose-phosphate moieties following the cleavage of DNA at an apurinic/apyrimidinic (AP) site by either an AP endonuclease or AP lyase. Involved in genome maintenance but probably not in phase variation, which contributes to the virulence and disease. This is Exodeoxyribonuclease I (sbcB) from Haemophilus influenzae (strain ATCC 51907 / DSM 11121 / KW20 / Rd).